The following is a 584-amino-acid chain: MSKQTYKVCFCFRRRYRHTVSVAPAEIKTLFDNYSDKGLMTTDLLLRFLIDVQKQDKATKEEAQDIVNASSSLLHRNGLHLDAFFKYLFAVTNSPLSSLEVHQDMDAPLSHYFIYTGHNSYLTGNQLSSDCSELPIIEALKKGVRVIELDIWPNSDEDGIDVLHGRTLTSPVELIKCLRAIREHAFDVSDYPVVVTLEDHLTPKLQAKVAEMVTDIFGEMLFTPPSGECLKEFPSPAFLKKRIMISTKPPKEYKAATDDDLVKKGRDLGDKEVWGREVPSFIRRDRSVDKNDSNGDDDDDDDDDDDDDDGDDKIKKNAPPEYKHLIAIEAGKPKGGITECLKVDPDKVRRLSLSEEQLEKASEKYAKQIVRFTQRNLLRVYPKGTRITSSNYNPLIAWSHGAQMVAFNMQGLGRSLWVMQGMFRGNGGCGYIKKPDLLLKSNAVFDPEATLPVKTTLRVTIYMGEGWYYDFPHTHFDRYSPPDFYTRVGIAGVPADTVMKKTKTLEDNWIPAWDEVFEFPLTVPELALLRIEVHEYDMSEKDDFGGQICLPVWELRQGIRAVPLRNQDGVKCRSVKLLVRLEFV.

In terms of domain architecture, EF-hand-like spans glutamate 26–histidine 102. A PI-PLC X-box domain is found at glutamine 103–lysine 248. Residues histidine 118 and histidine 164 contribute to the active site. Residues aspartate 285–alanine 318 are disordered. Serine 287 carries the post-translational modification Phosphoserine. Residues asparagine 294–aspartate 311 are compositionally biased toward acidic residues. One can recognise a PI-PLC Y-box domain in the interval lysine 323–leucine 439. The region spanning lysine 433 to asparagine 566 is the C2 domain.

Ca(2+) is required as a cofactor. Expressed in leaves, roots, flowers and siliques.

Its subcellular location is the cell membrane. The enzyme catalyses a 1,2-diacyl-sn-glycero-3-phospho-(1D-myo-inositol-4,5-bisphosphate) + H2O = 1D-myo-inositol 1,4,5-trisphosphate + a 1,2-diacyl-sn-glycerol + H(+). Functionally, the production of the second messenger molecules diacylglycerol (DAG) and inositol 1,4,5-trisphosphate (IP3) is mediated by activated phosphatidylinositol-specific phospholipase C enzymes. The polypeptide is Phosphoinositide phospholipase C 7 (PLC7) (Arabidopsis thaliana (Mouse-ear cress)).